Consider the following 364-residue polypeptide: DNA replication and repair protein RecF (364 aa).

Residue 30-37 (GNNAQGKT) participates in ATP binding.

This sequence belongs to the RecF family.

It is found in the cytoplasm. Functionally, the RecF protein is involved in DNA metabolism; it is required for DNA replication and normal SOS inducibility. RecF binds preferentially to single-stranded, linear DNA. It also seems to bind ATP. The chain is DNA replication and repair protein RecF from Clostridium botulinum (strain Langeland / NCTC 10281 / Type F).